The sequence spans 172 residues: MSEAEFHEMRDPRIEKVVVHMGVGEGGRELAKSEDILEEITGQESVRTISGRASQDFGVRQGEPVGAKVTLRGESAVEFLETALPITDLSASSFDETGNFGFGVEEHTEFPSQEYDPQIGIYGLDVTVNIVRPGYRVKKRDKRSRQIPSSHRMTVEDAVAFIESTFDVEVEE.

The protein belongs to the universal ribosomal protein uL5 family. As to quaternary structure, part of the 50S ribosomal subunit; contacts the 5S rRNA and probably tRNA. Forms a bridge to the 30S subunit in the 70S ribosome.

This is one of the proteins that bind and probably mediate the attachment of the 5S RNA into the large ribosomal subunit, where it forms part of the central protuberance. In the 70S ribosome it contacts protein S13 of the 30S subunit (bridge B1b), connecting the 2 subunits; this bridge is implicated in subunit movement. May contact the P site tRNA; the 5S rRNA and some of its associated proteins might help stabilize positioning of ribosome-bound tRNAs. In Haloferax mediterranei (strain ATCC 33500 / DSM 1411 / JCM 8866 / NBRC 14739 / NCIMB 2177 / R-4) (Halobacterium mediterranei), this protein is Large ribosomal subunit protein uL5.